Consider the following 95-residue polypeptide: Co-chaperonin GroES (95 aa).

This sequence belongs to the GroES chaperonin family. Heptamer of 7 subunits arranged in a ring. Interacts with the chaperonin GroEL.

It is found in the cytoplasm. Functionally, together with the chaperonin GroEL, plays an essential role in assisting protein folding. The GroEL-GroES system forms a nano-cage that allows encapsulation of the non-native substrate proteins and provides a physical environment optimized to promote and accelerate protein folding. GroES binds to the apical surface of the GroEL ring, thereby capping the opening of the GroEL channel. The chain is Co-chaperonin GroES from Francisella philomiragia subsp. philomiragia (strain ATCC 25017 / CCUG 19701 / FSC 153 / O#319-036).